Here is a 630-residue protein sequence, read N- to C-terminus: Plastin-1 (630 aa).

The fimbrin headpiece stretch occupies residues 1-114 (MENNVTTISR…LGGTSSISTE (114 aa)). 2 EF-hand domains span residues 11 to 46 (EELEELREAFNKIDIDNSGYVSDYELQDLFKEASLP) and 51 to 86 (KVREIIEKIFAVTDSNKDGKINFEEFVSLIQELKSK). Residues Asp24, Asp26, Ser28, Tyr30, Glu35, Asp64, Asn66, Asp68, Lys70, and Glu75 each coordinate Ca(2+). 2 actin-binding regions span residues 108-375 (TSSI…LFNT) and 376-624 (YPAL…LMGR). Positions 115–630 (GTQHSYSEEE…LMGRGLNKIK (516 aa)) are fimbrin core. 4 Calponin-homology (CH) domains span residues 122–238 (EEEK…KVGL), 266–377 (LSPE…NTYP), 396–505 (SNEE…RRYT), and 517–626 (KVND…GRGL).

In terms of assembly, monomer. Post-translationally, the N-terminus is blocked.

The protein resides in the cytoplasm. Its subcellular location is the cell projection. The protein localises to the stereocilium. In terms of biological role, actin-bundling protein. In the inner ear, it is required for stereocilia formation. Mediates liquid packing of actin filaments that is necessary for stereocilia to grow to their proper dimensions. This chain is Plastin-1 (PLS1), found in Gallus gallus (Chicken).